The primary structure comprises 572 residues: Proline--tRNA ligase (572 aa).

Belongs to the class-II aminoacyl-tRNA synthetase family. ProS type 1 subfamily. In terms of assembly, homodimer.

Its subcellular location is the cytoplasm. It catalyses the reaction tRNA(Pro) + L-proline + ATP = L-prolyl-tRNA(Pro) + AMP + diphosphate. Its function is as follows. Catalyzes the attachment of proline to tRNA(Pro) in a two-step reaction: proline is first activated by ATP to form Pro-AMP and then transferred to the acceptor end of tRNA(Pro). As ProRS can inadvertently accommodate and process non-cognate amino acids such as alanine and cysteine, to avoid such errors it has two additional distinct editing activities against alanine. One activity is designated as 'pretransfer' editing and involves the tRNA(Pro)-independent hydrolysis of activated Ala-AMP. The other activity is designated 'posttransfer' editing and involves deacylation of mischarged Ala-tRNA(Pro). The misacylated Cys-tRNA(Pro) is not edited by ProRS. In Leuconostoc mesenteroides subsp. mesenteroides (strain ATCC 8293 / DSM 20343 / BCRC 11652 / CCM 1803 / JCM 6124 / NCDO 523 / NBRC 100496 / NCIMB 8023 / NCTC 12954 / NRRL B-1118 / 37Y), this protein is Proline--tRNA ligase.